The sequence spans 415 residues: Imidazolonepropionase (415 aa).

2 residues coordinate Fe(3+): His-76 and His-78. 2 residues coordinate Zn(2+): His-76 and His-78. 4-imidazolone-5-propanoate is bound by residues Arg-85, Tyr-148, and His-181. Tyr-148 lines the N-formimidoyl-L-glutamate pocket. Residue His-246 coordinates Fe(3+). His-246 contacts Zn(2+). Residue Glu-249 coordinates 4-imidazolone-5-propanoate. Asp-320 serves as a coordination point for Fe(3+). Asp-320 is a Zn(2+) binding site. Asn-322 and Gly-324 together coordinate N-formimidoyl-L-glutamate. Thr-325 contacts 4-imidazolone-5-propanoate.

It belongs to the metallo-dependent hydrolases superfamily. HutI family. It depends on Zn(2+) as a cofactor. The cofactor is Fe(3+).

Its subcellular location is the cytoplasm. The enzyme catalyses 4-imidazolone-5-propanoate + H2O = N-formimidoyl-L-glutamate. It participates in amino-acid degradation; L-histidine degradation into L-glutamate; N-formimidoyl-L-glutamate from L-histidine: step 3/3. Functionally, catalyzes the hydrolytic cleavage of the carbon-nitrogen bond in imidazolone-5-propanoate to yield N-formimidoyl-L-glutamate. It is the third step in the universal histidine degradation pathway. In Caldanaerobacter subterraneus subsp. tengcongensis (strain DSM 15242 / JCM 11007 / NBRC 100824 / MB4) (Thermoanaerobacter tengcongensis), this protein is Imidazolonepropionase.